The primary structure comprises 334 residues: Ketol-acid reductoisomerase (NADP(+)) (334 aa).

The region spanning 1–181 (MTTVYYDQDV…GATRAGVIET (181 aa)) is the KARI N-terminal Rossmann domain. NADP(+)-binding positions include 25–28 (YGSQ), arginine 48, serine 52, and 82–85 (DEIQ). The active site involves histidine 107. Glycine 133 serves as a coordination point for NADP(+). A KARI C-terminal knotted domain is found at 182–327 (TFKEETETDL…RELREMMPFI (146 aa)). Residues aspartate 190, glutamate 194, glutamate 226, and glutamate 230 each coordinate Mg(2+). Serine 251 serves as a coordination point for substrate.

This sequence belongs to the ketol-acid reductoisomerase family. Requires Mg(2+) as cofactor.

It carries out the reaction (2R)-2,3-dihydroxy-3-methylbutanoate + NADP(+) = (2S)-2-acetolactate + NADPH + H(+). The catalysed reaction is (2R,3R)-2,3-dihydroxy-3-methylpentanoate + NADP(+) = (S)-2-ethyl-2-hydroxy-3-oxobutanoate + NADPH + H(+). The protein operates within amino-acid biosynthesis; L-isoleucine biosynthesis; L-isoleucine from 2-oxobutanoate: step 2/4. It participates in amino-acid biosynthesis; L-valine biosynthesis; L-valine from pyruvate: step 2/4. Its function is as follows. Involved in the biosynthesis of branched-chain amino acids (BCAA). Catalyzes an alkyl-migration followed by a ketol-acid reduction of (S)-2-acetolactate (S2AL) to yield (R)-2,3-dihydroxy-isovalerate. In the isomerase reaction, S2AL is rearranged via a Mg-dependent methyl migration to produce 3-hydroxy-3-methyl-2-ketobutyrate (HMKB). In the reductase reaction, this 2-ketoacid undergoes a metal-dependent reduction by NADPH to yield (R)-2,3-dihydroxy-isovalerate. In Staphylococcus aureus (strain USA300), this protein is Ketol-acid reductoisomerase (NADP(+)).